Reading from the N-terminus, the 443-residue chain is Adenylyltransferase and sulfurtransferase UBA4 (443 aa).

Residues Gly83, Asp104, Ser111 to Arg115, Lys128, and Asp172 to Thr173 contribute to the ATP site. Zn(2+) contacts are provided by Cys214 and Cys217. Cys231 acts as the Glycyl thioester intermediate; for adenylyltransferase activity in catalysis. 2 residues coordinate Zn(2+): Cys292 and Cys295. The Rhodanese domain occupies Gln343–Pro441. Cys400 serves as the catalytic Cysteine persulfide intermediate; for sulfurtransferase activity.

This sequence in the N-terminal section; belongs to the HesA/MoeB/ThiF family. UBA4 subfamily. Requires Zn(2+) as cofactor.

It localises to the cytoplasm. The protein resides in the cytosol. The protein operates within tRNA modification; 5-methoxycarbonylmethyl-2-thiouridine-tRNA biosynthesis. Plays a central role in 2-thiolation of mcm(5)S(2)U at tRNA wobble positions of cytosolic tRNA(Lys), tRNA(Glu) and tRNA(Gln). Acts by mediating the C-terminal thiocarboxylation of sulfur carrier URM1. Its N-terminus first activates URM1 as acyl-adenylate (-COAMP), then the persulfide sulfur on the catalytic cysteine is transferred to URM1 to form thiocarboxylation (-COSH) of its C-terminus. The reaction probably involves hydrogen sulfide that is generated from the persulfide intermediate and that acts as a nucleophile towards URM1. Subsequently, a transient disulfide bond is formed. Does not use thiosulfate as sulfur donor; NFS1 probably acting as a sulfur donor for thiocarboxylation reactions. Prior mcm(5) tRNA modification by the elongator complex is required for 2-thiolation. May also be involved in protein urmylation. This is Adenylyltransferase and sulfurtransferase UBA4 from Scheffersomyces stipitis (strain ATCC 58785 / CBS 6054 / NBRC 10063 / NRRL Y-11545) (Yeast).